We begin with the raw amino-acid sequence, 437 residues long: UDP-N-acetylmuramoylalanine--D-glutamate ligase (437 aa).

Residue 115 to 121 (GSNGKST) coordinates ATP.

It belongs to the MurCDEF family.

It localises to the cytoplasm. The catalysed reaction is UDP-N-acetyl-alpha-D-muramoyl-L-alanine + D-glutamate + ATP = UDP-N-acetyl-alpha-D-muramoyl-L-alanyl-D-glutamate + ADP + phosphate + H(+). The protein operates within cell wall biogenesis; peptidoglycan biosynthesis. In terms of biological role, cell wall formation. Catalyzes the addition of glutamate to the nucleotide precursor UDP-N-acetylmuramoyl-L-alanine (UMA). In Vibrio parahaemolyticus serotype O3:K6 (strain RIMD 2210633), this protein is UDP-N-acetylmuramoylalanine--D-glutamate ligase.